The following is a 322-amino-acid chain: MKKIAVLTSGGDSPGMNAAVRAVTRTAIYNNIEVYGVYQGYQGLLDDDIHKLELGSVGDTIQRGGTFLFSARCPQFKEEDVRKKAIENLRKRGIEGLVVIGGDGSYRGAQRISEECKEIQTIGIPGTIDNDINGTDFTIGFDTALNTIIESVDKIRDTASSHARTFIVEVMGRDCGDLALWAGLSVGAETIVLPEVNTDIKDVAEKIEQGIKRGKKHSIVMVAEGCMSGQECADELTKYINIDTRVSVLGHIQRGGSPSGADRVLASRLGGYAVELLKQGETAKGVGIRNNQLTSTPFDEIFAESDRKFNSQMYELAKELSI.

An ATP-binding site is contributed by glycine 11. 21–25 (RAVTR) lines the ADP pocket. ATP is bound by residues 72–73 (RC) and 102–105 (GDGS). Aspartate 103 serves as a coordination point for Mg(2+). 127-129 (TID) is a binding site for substrate. The Proton acceptor role is filled by aspartate 129. ADP is bound at residue arginine 156. Substrate contacts are provided by residues arginine 164 and 171–173 (MGR). Residues 187 to 189 (GAE), arginine 213, and 215 to 217 (KKH) each bind ADP. Substrate-binding positions include glutamate 224, arginine 245, and 251–254 (HIQR).

Belongs to the phosphofructokinase type A (PFKA) family. ATP-dependent PFK group I subfamily. Prokaryotic clade 'B1' sub-subfamily. As to quaternary structure, homotetramer. The cofactor is Mg(2+).

It is found in the cytoplasm. It carries out the reaction beta-D-fructose 6-phosphate + ATP = beta-D-fructose 1,6-bisphosphate + ADP + H(+). It functions in the pathway carbohydrate degradation; glycolysis; D-glyceraldehyde 3-phosphate and glycerone phosphate from D-glucose: step 3/4. Allosterically activated by ADP and other diphosphonucleosides, and allosterically inhibited by phosphoenolpyruvate. Functionally, catalyzes the phosphorylation of D-fructose 6-phosphate to fructose 1,6-bisphosphate by ATP, the first committing step of glycolysis. This Staphylococcus epidermidis (strain ATCC 12228 / FDA PCI 1200) protein is ATP-dependent 6-phosphofructokinase.